Here is a 203-residue protein sequence, read N- to C-terminus: Large ribosomal subunit protein bL25 (203 aa).

This sequence belongs to the bacterial ribosomal protein bL25 family. CTC subfamily. As to quaternary structure, part of the 50S ribosomal subunit; part of the 5S rRNA/L5/L18/L25 subcomplex. Contacts the 5S rRNA. Binds to the 5S rRNA independently of L5 and L18.

In terms of biological role, this is one of the proteins that binds to the 5S RNA in the ribosome where it forms part of the central protuberance. This chain is Large ribosomal subunit protein bL25, found in Cereibacter sphaeroides (strain ATCC 17025 / ATH 2.4.3) (Rhodobacter sphaeroides).